The sequence spans 385 residues: WD repeat-containing protein 74 (385 aa).

WD repeat units lie at residues 40–80 (RREE…FQGQ), 83–122 (CPGG…ASSD), 128–168 (RVGP…EPLF), 179–220 (DLRV…RRPV), 224–266 (TYGE…GCLK), and 267–306 (GLAG…GLEH). The residue at position 214 (Ser214) is a Phosphoserine. Lys311 bears the N6-methyllysine mark. Positions 320–385 (SGRDNWEDEP…KKKRPGSTSS (66 aa)) are required for nucleolar and nuclear location. A disordered region spans residues 323–385 (DNWEDEPQEP…KKKRPGSTSS (63 aa)). The span at 372–385 (ARRRKKKRPGSTSS) shows a compositional bias: basic residues.

Isoform 1 interacts (through WDR repeats) with NVL; the interaction is independent of RNA or pre-60S ribosome particles. Isoform 2 does not interact with NVL. Interacts with MTREX; the interaction dissociation in a late stage of rRNA synthesis is required for appropriate maturation of pre-60S particles and depends on the ATPase activity of NVL.

Its subcellular location is the nucleus. It localises to the nucleolus. Regulatory protein of the MTREX-exosome complex involved in the synthesis of the 60S ribosomal subunit. Participates in an early cleavage of the pre-rRNA processing pathway in cooperation with NVL. The protein is WD repeat-containing protein 74 (WDR74) of Bos taurus (Bovine).